Here is an 86-residue protein sequence, read N- to C-terminus: YcgL domain-containing protein XCV4171 (86 aa).

The YcgL domain maps to 1-83; sequence MHAYVYKSQR…PKTIVLAGEC (83 aa).

In Xanthomonas euvesicatoria pv. vesicatoria (strain 85-10) (Xanthomonas campestris pv. vesicatoria), this protein is YcgL domain-containing protein XCV4171.